Reading from the N-terminus, the 298-residue chain is Ketohexokinase (298 aa).

The beta-D-fructose site is built by aspartate 15, glycine 41, asparagine 42, and asparagine 45. Residues arginine 108, alanine 226 to glycine 229, and glycine 255 to aspartate 258 each bind ATP. Residue aspartate 258 participates in beta-D-fructose binding.

This sequence belongs to the carbohydrate kinase PfkB family. In terms of assembly, homodimer.

The catalysed reaction is beta-D-fructose + ATP = beta-D-fructose 1-phosphate + ADP + H(+). It participates in carbohydrate metabolism; fructose metabolism. Requires potassium. Inhibition by ADP. Catalyzes the phosphorylation of the ketose sugar fructose to fructose-1-phosphate. In Mus musculus (Mouse), this protein is Ketohexokinase.